We begin with the raw amino-acid sequence, 272 residues long: Putative phosphoenolpyruvate synthase regulatory protein (272 aa).

152–159 (GVSRCGKT) contributes to the ADP binding site.

This sequence belongs to the pyruvate, phosphate/water dikinase regulatory protein family. PSRP subfamily.

The catalysed reaction is [pyruvate, water dikinase] + ADP = [pyruvate, water dikinase]-phosphate + AMP + H(+). It carries out the reaction [pyruvate, water dikinase]-phosphate + phosphate + H(+) = [pyruvate, water dikinase] + diphosphate. Its function is as follows. Bifunctional serine/threonine kinase and phosphorylase involved in the regulation of the phosphoenolpyruvate synthase (PEPS) by catalyzing its phosphorylation/dephosphorylation. In Pseudomonas putida (strain ATCC 700007 / DSM 6899 / JCM 31910 / BCRC 17059 / LMG 24140 / F1), this protein is Putative phosphoenolpyruvate synthase regulatory protein.